We begin with the raw amino-acid sequence, 98 residues long: Large ribosomal subunit protein uL23 (98 aa).

This sequence belongs to the universal ribosomal protein uL23 family. Part of the 50S ribosomal subunit. Contacts protein L29, and trigger factor when it is bound to the ribosome.

Its function is as follows. One of the early assembly proteins it binds 23S rRNA. One of the proteins that surrounds the polypeptide exit tunnel on the outside of the ribosome. Forms the main docking site for trigger factor binding to the ribosome. The sequence is that of Large ribosomal subunit protein uL23 from Streptococcus sanguinis (strain SK36).